The sequence spans 185 residues: Ribosome-recycling factor (185 aa).

It belongs to the RRF family.

The protein localises to the cytoplasm. Its function is as follows. Responsible for the release of ribosomes from messenger RNA at the termination of protein biosynthesis. May increase the efficiency of translation by recycling ribosomes from one round of translation to another. The chain is Ribosome-recycling factor from Xanthomonas euvesicatoria pv. vesicatoria (strain 85-10) (Xanthomonas campestris pv. vesicatoria).